A 436-amino-acid polypeptide reads, in one-letter code: Glutamyl-tRNA reductase (436 aa).

Residues 49 to 52, Ser109, 114 to 116, and Gln120 contribute to the substrate site; these read TCNR and EGQ. Residue Cys50 is the Nucleophile of the active site. 198–203 contributes to the NADP(+) binding site; sequence GAGRMS.

This sequence belongs to the glutamyl-tRNA reductase family. Homodimer.

It catalyses the reaction (S)-4-amino-5-oxopentanoate + tRNA(Glu) + NADP(+) = L-glutamyl-tRNA(Glu) + NADPH + H(+). Its pathway is porphyrin-containing compound metabolism; protoporphyrin-IX biosynthesis; 5-aminolevulinate from L-glutamyl-tRNA(Glu): step 1/2. The protein operates within porphyrin-containing compound metabolism; chlorophyll biosynthesis. Its function is as follows. Catalyzes the NADPH-dependent reduction of glutamyl-tRNA(Glu) to glutamate 1-semialdehyde (GSA). The polypeptide is Glutamyl-tRNA reductase (Prochlorococcus marinus (strain MIT 9312)).